A 101-amino-acid chain; its full sequence is Large ribosomal subunit protein uL24 (101 aa).

The protein belongs to the universal ribosomal protein uL24 family. In terms of assembly, part of the 50S ribosomal subunit.

Functionally, one of two assembly initiator proteins, it binds directly to the 5'-end of the 23S rRNA, where it nucleates assembly of the 50S subunit. In terms of biological role, one of the proteins that surrounds the polypeptide exit tunnel on the outside of the subunit. The protein is Large ribosomal subunit protein uL24 of Borrelia recurrentis (strain A1).